Consider the following 197-residue polypeptide: Isopentenyl-diphosphate Delta-isomerase (197 aa).

Mn(2+) is bound by residues His-41 and His-48. The Nudix hydrolase domain occupies 46–183; the sequence is QLHRAFSVFL…AWFMTVLDAA (138 aa). Residue Cys-83 is part of the active site. Residue His-85 participates in Mn(2+) binding. Position 103 (Glu-103) interacts with Mg(2+). Mn(2+) contacts are provided by Glu-130 and Glu-132. The active site involves Glu-132.

Belongs to the IPP isomerase type 1 family. The cofactor is Mg(2+). It depends on Mn(2+) as a cofactor.

The protein localises to the cytoplasm. The catalysed reaction is isopentenyl diphosphate = dimethylallyl diphosphate. It participates in isoprenoid biosynthesis; dimethylallyl diphosphate biosynthesis; dimethylallyl diphosphate from isopentenyl diphosphate: step 1/1. Its function is as follows. Catalyzes the 1,3-allylic rearrangement of the homoallylic substrate isopentenyl (IPP) to its highly electrophilic allylic isomer, dimethylallyl diphosphate (DMAPP). This is Isopentenyl-diphosphate Delta-isomerase from Streptomyces griseus subsp. griseus (strain JCM 4626 / CBS 651.72 / NBRC 13350 / KCC S-0626 / ISP 5235).